Reading from the N-terminus, the 313-residue chain is Dimethyladenosine transferase (313 aa).

The disordered stretch occupies residues 1 to 22 (MPKIKSAASGRRRERQQQRGQL). Histidine 37, leucine 39, glycine 64, glutamate 85, aspartate 113, and asparagine 128 together coordinate S-adenosyl-L-methionine.

Belongs to the class I-like SAM-binding methyltransferase superfamily. rRNA adenine N(6)-methyltransferase family. Part of the small subunit (SSU) processome, composed of more than 70 proteins and the RNA chaperone small nucleolar RNA (snoRNA) U3.

It localises to the nucleus. The protein resides in the nucleoplasm. The protein localises to the nucleolus. It carries out the reaction adenosine(1779)/adenosine(1780) in 18S rRNA + 4 S-adenosyl-L-methionine = N(6)-dimethyladenosine(1779)/N(6)-dimethyladenosine(1780) in 18S rRNA + 4 S-adenosyl-L-homocysteine + 4 H(+). Specifically dimethylates two adjacent adenosines in the loop of a conserved hairpin near the 3'-end of 18S rRNA in the 40S particle. Involved in the pre-rRNA processing steps leading to small-subunit rRNA production independently of its RNA-modifying catalytic activity. Part of the small subunit (SSU) processome, first precursor of the small eukaryotic ribosomal subunit. During the assembly of the SSU processome in the nucleolus, many ribosome biogenesis factors, an RNA chaperone and ribosomal proteins associate with the nascent pre-rRNA and work in concert to generate RNA folding, modifications, rearrangements and cleavage as well as targeted degradation of pre-ribosomal RNA by the RNA exosome. The protein is Dimethyladenosine transferase (DIMT1) of Bos taurus (Bovine).